Consider the following 127-residue polypeptide: Secreted RxLR effector protein 3 (127 aa).

Residues 1-20 (MRPPLLLFLTVTVLVSCASA) form the signal peptide. The RxLR-dEER signature appears at 30–48 (RSLRSIKTTTNDDAAEEER).

It belongs to the RxLR effector family.

It localises to the secreted. It is found in the host cell. Functionally, secreted effector that partially suppresses elicitor-induced cell death in host and enhances virulence of P.parasitica. This is Secreted RxLR effector protein 3 from Phytophthora nicotianae (Potato buckeye rot agent).